The primary structure comprises 126 residues: MSSKTDEILEQLKGLTLIEAADLVKAIEEAFGVDASAPVGGGMVMMAPAAGGGADAAEEKSAFDLVLEEVPADKKIAVLKVVRSLTNLGLKEAKDLVEATPKVVKEGASKDELKQLKKNLKQLEQK.

The protein belongs to the bacterial ribosomal protein bL12 family. As to quaternary structure, homodimer. Part of the ribosomal stalk of the 50S ribosomal subunit. Forms a multimeric L10(L12)X complex, where L10 forms an elongated spine to which 2 to 4 L12 dimers bind in a sequential fashion. Binds GTP-bound translation factors.

It localises to the plastid. Its subcellular location is the cyanelle. In terms of biological role, forms part of the ribosomal stalk which helps the ribosome interact with GTP-bound translation factors. Is thus essential for accurate translation. The sequence is that of Large ribosomal subunit protein bL12c from Cyanophora paradoxa.